The following is a 162-amino-acid chain: MTEEIAGFQTSPKAQVQAAFEEIARRSMHALSFLHPSMPVYVSDFTLFEGQWTGCVITPWMLSAVIFPGPDQLWPLRKVSEKIGLQLPYGTMTFTVGELDGVSQYLSCSLMSPLSHSMSIEEGQRLTDDCARMILSLPVTNPDVPHAGRRALLFGRRSGENA.

It belongs to the HupJ family.

The polypeptide is Hydrogenase-2 operon protein HybE (hybE) (Escherichia coli O157:H7).